A 915-amino-acid polypeptide reads, in one-letter code: Metabotropic glutamate receptor 7 (915 aa).

The first 34 residues, 1 to 34 (MVQLRKLLRVLTLMKFPCCVLEVLLCALAAAARG), serve as a signal peptide directing secretion. The Extracellular portion of the chain corresponds to 35-590 (QEMYAPHSIR…IIKLEWHSPW (556 aa)). Cysteine 67 and cysteine 109 are disulfide-bonded. A glycan (N-linked (GlcNAc...) asparagine) is linked at asparagine 98. Residues serine 159, 180–182 (AST), tyrosine 230, and aspartate 314 contribute to the L-glutamate site. Disulfide bonds link cysteine 249/cysteine 541, cysteine 374/cysteine 390, cysteine 430/cysteine 437, cysteine 523/cysteine 542, cysteine 527/cysteine 545, cysteine 548/cysteine 560, and cysteine 563/cysteine 576. Lysine 407 contacts L-glutamate. Asparagine 458 and asparagine 486 each carry an N-linked (GlcNAc...) asparagine glycan. Asparagine 572 is a glycosylation site (N-linked (GlcNAc...) asparagine). Residues 591–615 (AVIPVFLAMLGIIATIFVMATFIRY) traverse the membrane as a helical segment. At 616–627 (NDTPIVRASGRE) the chain is on the cytoplasmic side. Residues 628 to 648 (LSYVLLTGIFLCYIITFLMIA) form a helical membrane-spanning segment. The Extracellular segment spans residues 649-654 (KPDVAV). The chain crosses the membrane as a helical span at residues 655-675 (CSFRRVFLGLGMCISYAALLT). Residues 676–702 (KTNRIYRIFEQGKKSVTAPRLISPTSQ) lie on the Cytoplasmic side of the membrane. The helical transmembrane segment at 703 to 723 (LAITSSLISVQLLGVFIWFGV) threads the bilayer. At 724-753 (DPPNIIIDYDEHKTMNPEQARGVLKCDITD) the chain is on the extracellular side. A helical membrane pass occupies residues 754-775 (LQIICSLGYSILLMVTCTVYAI). The Cytoplasmic portion of the chain corresponds to 776 to 788 (KTRGVPENFNEAK). A helical transmembrane segment spans residues 789–810 (PIGFTMYTTCIVWLAFIPIFFG). Topologically, residues 811–825 (TAQSAEKLYIQTTTL) are extracellular. Residues 826-850 (TISMNLSASVALGMLYMPKVYIIIF) traverse the membrane as a helical segment. At 851 to 915 (HPELNVQKRK…KYVSYNNLVI (65 aa)) the chain is on the cytoplasmic side. Positions 874-895 (SRLSHKPSDRPNGEAKTELCEN) are disordered. Basic and acidic residues predominate over residues 879–892 (KPSDRPNGEAKTEL). A Phosphoserine modification is found at serine 900.

The protein belongs to the G-protein coupled receptor 3 family. Homodimer. Interacts with PICK1. N-glycosylated. In terms of tissue distribution, expressed in many areas of the brain, especially in the cerebral cortex, hippocampus, and cerebellum. Expression of GRM7 isoforms in non-neuronal tissues appears to be restricted to isoform 3 and isoform 4.

The protein resides in the cell membrane. G-protein coupled receptor activated by glutamate that regulates axon outgrowth through the MAPK-cAMP-PKA signaling pathway during neuronal development. Ligand binding causes a conformation change that triggers signaling via guanine nucleotide-binding proteins (G proteins) and modulates the activity of downstream effectors, such as adenylate cyclase that it inhibits. The sequence is that of Metabotropic glutamate receptor 7 (GRM7) from Homo sapiens (Human).